The chain runs to 383 residues: Heme chaperone HemW (383 aa).

One can recognise a Radical SAM core domain in the interval 1–241 (MPKLPPLSLY…LTMAGYQQYE (241 aa)). Tyrosine 10 is a binding site for S-adenosyl-L-methionine. Residues cysteine 16, cysteine 20, and cysteine 23 each contribute to the [4Fe-4S] cluster site. Residues glycine 70, 71 to 72 (GT), glutamate 103, glutamine 130, arginine 142, and aspartate 167 each bind S-adenosyl-L-methionine.

It belongs to the anaerobic coproporphyrinogen-III oxidase family. HemW subfamily. [4Fe-4S] cluster is required as a cofactor.

It is found in the cytoplasm. Functionally, probably acts as a heme chaperone, transferring heme to an unknown acceptor. Binds one molecule of heme per monomer, possibly covalently. Binds 1 [4Fe-4S] cluster. The cluster is coordinated with 3 cysteines and an exchangeable S-adenosyl-L-methionine. This Haemophilus influenzae (strain ATCC 51907 / DSM 11121 / KW20 / Rd) protein is Heme chaperone HemW.